A 272-amino-acid polypeptide reads, in one-letter code: Ribosomal RNA small subunit methyltransferase A (272 aa).

S-adenosyl-L-methionine-binding residues include N18, L20, G45, E66, D91, and N113.

Belongs to the class I-like SAM-binding methyltransferase superfamily. rRNA adenine N(6)-methyltransferase family. RsmA subfamily.

The protein localises to the cytoplasm. It carries out the reaction adenosine(1518)/adenosine(1519) in 16S rRNA + 4 S-adenosyl-L-methionine = N(6)-dimethyladenosine(1518)/N(6)-dimethyladenosine(1519) in 16S rRNA + 4 S-adenosyl-L-homocysteine + 4 H(+). In terms of biological role, specifically dimethylates two adjacent adenosines (A1518 and A1519) in the loop of a conserved hairpin near the 3'-end of 16S rRNA in the 30S particle. May play a critical role in biogenesis of 30S subunits. The chain is Ribosomal RNA small subunit methyltransferase A from Proteus mirabilis (strain HI4320).